The primary structure comprises 209 residues: Ribosomal RNA large subunit methyltransferase E (209 aa).

Glycine 63, tryptophan 65, aspartate 83, aspartate 99, and aspartate 124 together coordinate S-adenosyl-L-methionine. The Proton acceptor role is filled by lysine 164.

This sequence belongs to the class I-like SAM-binding methyltransferase superfamily. RNA methyltransferase RlmE family.

The protein resides in the cytoplasm. The enzyme catalyses uridine(2552) in 23S rRNA + S-adenosyl-L-methionine = 2'-O-methyluridine(2552) in 23S rRNA + S-adenosyl-L-homocysteine + H(+). Functionally, specifically methylates the uridine in position 2552 of 23S rRNA at the 2'-O position of the ribose in the fully assembled 50S ribosomal subunit. The protein is Ribosomal RNA large subunit methyltransferase E of Aliivibrio fischeri (strain MJ11) (Vibrio fischeri).